The sequence spans 391 residues: Phosphoglycerate kinase (391 aa).

Substrate is bound by residues 21-23 (DLN), arginine 36, 59-62 (HLGR), arginine 113, and arginine 146. Residues lysine 197, glutamate 319, and 345-348 (GGDT) contribute to the ATP site.

It belongs to the phosphoglycerate kinase family. In terms of assembly, monomer.

It is found in the cytoplasm. It carries out the reaction (2R)-3-phosphoglycerate + ATP = (2R)-3-phospho-glyceroyl phosphate + ADP. It participates in carbohydrate degradation; glycolysis; pyruvate from D-glyceraldehyde 3-phosphate: step 2/5. The chain is Phosphoglycerate kinase from Shewanella putrefaciens (strain CN-32 / ATCC BAA-453).